We begin with the raw amino-acid sequence, 804 residues long: Phenylalanine--tRNA ligase beta subunit (804 aa).

Residues 40 to 155 (GEGIKGVVIG…GDAETGADAL (116 aa)) form the tRNA-binding domain. In terms of domain architecture, B5 spans 409–484 (IKENVIRLSV…RLYGYDNIPS (76 aa)). 4 residues coordinate Mg(2+): Asp-462, Asp-468, Glu-471, and Glu-472. The FDX-ACB domain occupies 710 to 803 (PKYPSVTRDI…LEDKYQAVLR (94 aa)).

This sequence belongs to the phenylalanyl-tRNA synthetase beta subunit family. Type 1 subfamily. In terms of assembly, tetramer of two alpha and two beta subunits. It depends on Mg(2+) as a cofactor.

It is found in the cytoplasm. It carries out the reaction tRNA(Phe) + L-phenylalanine + ATP = L-phenylalanyl-tRNA(Phe) + AMP + diphosphate + H(+). This Bacillus licheniformis (strain ATCC 14580 / DSM 13 / JCM 2505 / CCUG 7422 / NBRC 12200 / NCIMB 9375 / NCTC 10341 / NRRL NRS-1264 / Gibson 46) protein is Phenylalanine--tRNA ligase beta subunit.